The sequence spans 310 residues: ADP-L-glycero-D-manno-heptose-6-epimerase (310 aa).

NADP(+)-binding positions include 10–11, 31–32, Lys38, Lys53, 75–79, and Asn92; these read FI, DN, and EGACS. The Proton acceptor role is filled by Tyr140. Lys144 lines the NADP(+) pocket. Asn169 is a substrate binding site. The NADP(+) site is built by Val170 and Lys178. Lys178 acts as the Proton acceptor in catalysis. Residues Ser180, His187, 201 to 204, Arg209, and Tyr272 contribute to the substrate site; that span reads FSGS.

It belongs to the NAD(P)-dependent epimerase/dehydratase family. HldD subfamily. Homopentamer. NADP(+) is required as a cofactor.

It catalyses the reaction ADP-D-glycero-beta-D-manno-heptose = ADP-L-glycero-beta-D-manno-heptose. It functions in the pathway nucleotide-sugar biosynthesis; ADP-L-glycero-beta-D-manno-heptose biosynthesis; ADP-L-glycero-beta-D-manno-heptose from D-glycero-beta-D-manno-heptose 7-phosphate: step 4/4. Functionally, catalyzes the interconversion between ADP-D-glycero-beta-D-manno-heptose and ADP-L-glycero-beta-D-manno-heptose via an epimerization at carbon 6 of the heptose. This chain is ADP-L-glycero-D-manno-heptose-6-epimerase, found in Pectobacterium atrosepticum (strain SCRI 1043 / ATCC BAA-672) (Erwinia carotovora subsp. atroseptica).